Here is a 632-residue protein sequence, read N- to C-terminus: tRNA uridine 5-carboxymethylaminomethyl modification enzyme MnmG (632 aa).

FAD-binding positions include Gly13 to Gly18, Val125, and Ser180. Gly273–Phe287 contacts NAD(+). Gln370 contacts FAD.

The protein belongs to the MnmG family. Homodimer. Heterotetramer of two MnmE and two MnmG subunits. Requires FAD as cofactor.

It localises to the cytoplasm. Functionally, NAD-binding protein involved in the addition of a carboxymethylaminomethyl (cmnm) group at the wobble position (U34) of certain tRNAs, forming tRNA-cmnm(5)s(2)U34. This is tRNA uridine 5-carboxymethylaminomethyl modification enzyme MnmG from Nitrosospira multiformis (strain ATCC 25196 / NCIMB 11849 / C 71).